Reading from the N-terminus, the 333-residue chain is Fructose-1,6-bisphosphatase class 1 (333 aa).

4 residues coordinate Mg(2+): glutamate 89, aspartate 110, leucine 112, and aspartate 113. Substrate contacts are provided by residues 113–116 (DGSS), asparagine 206, tyrosine 239, 257–259 (YLY), and lysine 269. A Mg(2+)-binding site is contributed by glutamate 275.

This sequence belongs to the FBPase class 1 family. Homotetramer. Requires Mg(2+) as cofactor.

The protein resides in the cytoplasm. It carries out the reaction beta-D-fructose 1,6-bisphosphate + H2O = beta-D-fructose 6-phosphate + phosphate. It participates in carbohydrate biosynthesis; gluconeogenesis. This is Fructose-1,6-bisphosphatase class 1 from Sodalis glossinidius (strain morsitans).